We begin with the raw amino-acid sequence, 507 residues long: Cytochrome P450 monooxygenase cloA (507 aa).

Residues 15–35 traverse the membrane as a helical segment; sequence WTWILLTTCIALTSPLVLKGI. The N-linked (GlcNAc...) asparagine glycan is linked to Asn-247. Cys-450 is a heme binding site.

It belongs to the cytochrome P450 family. Heme serves as cofactor.

It localises to the membrane. It participates in alkaloid biosynthesis; ergot alkaloid biosynthesis. Functionally, cytochrome P450 monooxygenase; part of the gene cluster that mediates the biosynthesis of fungal ergot alkaloid. DmaW catalyzes the first step of ergot alkaloid biosynthesis by condensing dimethylallyl diphosphate (DMAP) and tryptophan to form 4-dimethylallyl-L-tryptophan. The second step is catalyzed by the methyltransferase easF that methylates 4-dimethylallyl-L-tryptophan in the presence of S-adenosyl-L-methionine, resulting in the formation of 4-dimethylallyl-L-abrine. The catalase easC and the FAD-dependent oxidoreductase easE then transform 4-dimethylallyl-L-abrine to chanoclavine-I which is further oxidized by easD in the presence of NAD(+), resulting in the formation of chanoclavine-I aldehyde. Agroclavine dehydrogenase easG then mediates the conversion of chanoclavine-I aldehyde to agroclavine via a non-enzymatic adduct reaction: the substrate is an iminium intermediate that is formed spontaneously from chanoclavine-I aldehyde in the presence of glutathione. The presence of easA is not required to complete this reaction. Further conversion of agroclavine to paspalic acid is a two-step process involving oxidation of agroclavine to elymoclavine and of elymoclavine to paspalic acid, the second step being performed by the elymoclavine oxidase cloA. Paspalic acid is then further converted to D-lysergic acid. Ergopeptines are assembled from D-lysergic acid and three different amino acids by the D-lysergyl-peptide-synthetases composed each of a monomudular and a trimodular nonribosomal peptide synthetase subunit. LpsB and lpsC encode the monomodular subunits responsible for D-lysergic acid activation and incorporation into the ergopeptine backbone. LpsA1 and A2 subunits encode the trimodular nonribosomal peptide synthetase assembling the tripeptide portion of ergopeptines. LpsA1 is responsible for formation of the major ergopeptine, ergotamine, and lpsA2 for alpha-ergocryptine, the minor ergopeptine of the total alkaloid mixture elaborated by C.purpurea. D-lysergyl-tripeptides are assembled by the nonribosomal peptide synthetases and released as N-(D-lysergyl-aminoacyl)-lactams. Cyclolization of the D-lysergyl-tripeptides is performed by the Fe(2+)/2-ketoglutarate-dependent dioxygenase easH which introduces a hydroxyl group into N-(D-lysergyl-aminoacyl)-lactam at alpha-C of the aminoacyl residue followed by spontaneous condensation with the terminal lactam carbonyl group. The chain is Cytochrome P450 monooxygenase cloA from Claviceps purpurea (Ergot fungus).